Reading from the N-terminus, the 514-residue chain is Probable lipid II flippase MurJ (514 aa).

The next 14 helical transmembrane spans lie at isoleucine 3–phenylalanine 23, aspartate 25–phenylalanine 45, isoleucine 92–isoleucine 112, leucine 130–isoleucine 150, phenylalanine 157–phenylalanine 177, isoleucine 186–proline 206, isoleucine 245–isoleucine 265, leucine 271–phenylalanine 291, leucine 315–isoleucine 335, leucine 354–phenylalanine 374, isoleucine 386–glutamine 406, glycine 409–leucine 429, leucine 448–serine 468, and leucine 481–isoleucine 501.

Belongs to the MurJ/MviN family.

It localises to the cell inner membrane. It participates in cell wall biogenesis; peptidoglycan biosynthesis. Its function is as follows. Involved in peptidoglycan biosynthesis. Transports lipid-linked peptidoglycan precursors from the inner to the outer leaflet of the cytoplasmic membrane. The polypeptide is Probable lipid II flippase MurJ (Buchnera aphidicola subsp. Schizaphis graminum (strain Sg)).